Consider the following 291-residue polypeptide: Lipoyl synthase (291 aa).

[4Fe-4S] cluster is bound by residues Cys43, Cys48, Cys54, Cys69, Cys73, Cys76, and Ser280. The Radical SAM core domain maps to 55-269 (FSSRTATFLI…AAYGRARGIP (215 aa)).

Belongs to the radical SAM superfamily. Lipoyl synthase family. The cofactor is [4Fe-4S] cluster.

It is found in the cytoplasm. The catalysed reaction is [[Fe-S] cluster scaffold protein carrying a second [4Fe-4S](2+) cluster] + N(6)-octanoyl-L-lysyl-[protein] + 2 oxidized [2Fe-2S]-[ferredoxin] + 2 S-adenosyl-L-methionine + 4 H(+) = [[Fe-S] cluster scaffold protein] + N(6)-[(R)-dihydrolipoyl]-L-lysyl-[protein] + 4 Fe(3+) + 2 hydrogen sulfide + 2 5'-deoxyadenosine + 2 L-methionine + 2 reduced [2Fe-2S]-[ferredoxin]. The protein operates within protein modification; protein lipoylation via endogenous pathway; protein N(6)-(lipoyl)lysine from octanoyl-[acyl-carrier-protein]: step 2/2. Its function is as follows. Catalyzes the radical-mediated insertion of two sulfur atoms into the C-6 and C-8 positions of the octanoyl moiety bound to the lipoyl domains of lipoate-dependent enzymes, thereby converting the octanoylated domains into lipoylated derivatives. In Oleidesulfovibrio alaskensis (strain ATCC BAA-1058 / DSM 17464 / G20) (Desulfovibrio alaskensis), this protein is Lipoyl synthase.